Reading from the N-terminus, the 113-residue chain is UPF0342 protein SZO_10960 (113 aa).

It belongs to the UPF0342 family.

The chain is UPF0342 protein SZO_10960 from Streptococcus equi subsp. zooepidemicus (strain H70).